The sequence spans 200 residues: Dephospho-CoA kinase (200 aa).

The region spanning 4–200 (VLALTGGIAT…QLLIKIKEEG (197 aa)) is the DPCK domain. 12 to 17 (ATGKST) is a binding site for ATP.

The protein belongs to the CoaE family.

It localises to the cytoplasm. The catalysed reaction is 3'-dephospho-CoA + ATP = ADP + CoA + H(+). It participates in cofactor biosynthesis; coenzyme A biosynthesis; CoA from (R)-pantothenate: step 5/5. Functionally, catalyzes the phosphorylation of the 3'-hydroxyl group of dephosphocoenzyme A to form coenzyme A. In Lactobacillus acidophilus (strain ATCC 700396 / NCK56 / N2 / NCFM), this protein is Dephospho-CoA kinase.